Consider the following 463-residue polypeptide: A-type ATP synthase subunit B (463 aa).

The protein belongs to the ATPase alpha/beta chains family. In terms of assembly, has multiple subunits with at least A(3), B(3), C, D, E, F, H, I and proteolipid K(x).

It localises to the cell membrane. In terms of biological role, component of the A-type ATP synthase that produces ATP from ADP in the presence of a proton gradient across the membrane. The B chain is a regulatory subunit. The polypeptide is A-type ATP synthase subunit B (Aeropyrum pernix (strain ATCC 700893 / DSM 11879 / JCM 9820 / NBRC 100138 / K1)).